A 324-amino-acid chain; its full sequence is Putative glycosyltransferase R655 (324 aa).

This sequence belongs to the glycosyltransferase 25 family.

The sequence is that of Putative glycosyltransferase R655 from Acanthamoeba polyphaga (Amoeba).